The sequence spans 910 residues: Disease susceptibility protein LOV1 (910 aa).

Positions 22–60 form a coiled coil; the sequence is ARLNGIGEQVDGLKRQLGRLQSLLKDADAKKHESERVRN. Residues 169–461 form the NB-ARC domain; it reads EQSVEALAGH…AAEGIITSSD (293 aa). LRR repeat units lie at residues 584-609, 610-632, 634-655, 700-725, 726-751, and 847-871; these read LPLL…IGDL, IHLR…LRNL, LLLY…LKEM, MTKL…LGQL, RSLE…IVLN, and MPLL…NYIT.

Belongs to the disease resistance NB-LRR family. RPP8/HRT subfamily.

In terms of biological role, confers susceptibility to the fungus Cochliobolus victoriae by conditioning victorin-dependent (victorin is a toxin synthesized by C.victoriae) induction of defense-associated proteins. The protein is Disease susceptibility protein LOV1 (LOV1) of Arabidopsis thaliana (Mouse-ear cress).